Consider the following 363-residue polypeptide: 3-isopropylmalate dehydrogenase (363 aa).

Residue 78–91 (GKKWDYLPIESRPE) participates in NAD(+) binding. Substrate contacts are provided by Arg99, Arg109, Arg138, and Asp227. Mg(2+) is bound by residues Asp227, Asp251, and Asp255. 285–297 (GSAPDIEGKNIAN) contacts NAD(+).

The protein belongs to the isocitrate and isopropylmalate dehydrogenases family. LeuB type 1 subfamily. In terms of assembly, homodimer. The cofactor is Mg(2+). Requires Mn(2+) as cofactor.

The protein localises to the cytoplasm. The catalysed reaction is (2R,3S)-3-isopropylmalate + NAD(+) = 4-methyl-2-oxopentanoate + CO2 + NADH. The protein operates within amino-acid biosynthesis; L-leucine biosynthesis; L-leucine from 3-methyl-2-oxobutanoate: step 3/4. Its function is as follows. Catalyzes the oxidation of 3-carboxy-2-hydroxy-4-methylpentanoate (3-isopropylmalate) to 3-carboxy-4-methyl-2-oxopentanoate. The product decarboxylates to 4-methyl-2 oxopentanoate. In Buchnera aphidicola subsp. Schizaphis graminum (strain Sg), this protein is 3-isopropylmalate dehydrogenase.